Consider the following 157-residue polypeptide: Large ribosomal subunit protein eL24 (157 aa).

Residue Lys2 forms a Glycyl lysine isopeptide (Lys-Gly) (interchain with G-Cter in SUMO2) linkage. An ADP-ribosyl glutamic acid modification is found at Glu4. Lys27 is modified (N6-acetyllysine; alternate). Lys27 participates in a covalent cross-link: Glycyl lysine isopeptide (Lys-Gly) (interchain with G-Cter in SUMO2); alternate. Lys35 is covalently cross-linked (Glycyl lysine isopeptide (Lys-Gly) (interchain with G-Cter in SUMO2)). Lys77 is modified (N6-acetyllysine). Position 83 is a phosphothreonine (Thr83). The residue at position 86 (Ser86) is a Phosphoserine. The residue at position 93 (Lys93) is an N6-acetyllysine. Basic and acidic residues predominate over residues 106 to 117 (EQAIRAAKEAKK). Residues 106–157 (EQAIRAAKEAKKAKQASKKTAMAAAKAPTKAAPKQKIVKPVKVSAPRVGGKR) are disordered. A compositionally biased stretch (low complexity) spans 123–140 (KKTAMAAAKAPTKAAPKQ). Lys131 is modified (N6-succinyllysine). Lys147 participates in a covalent cross-link: Glycyl lysine isopeptide (Lys-Gly) (interchain with G-Cter in SUMO2). Residue Ser149 is modified to Phosphoserine.

The protein belongs to the eukaryotic ribosomal protein eL24 family. As to quaternary structure, component of the large ribosomal subunit. Post-translationally, mono-ADP-ribosylation at Glu-4 by PARP16 inhibits polysome assembly and mRNA loading, thereby inhibiting protein translation.

It localises to the cytoplasm. Component of the large ribosomal subunit. The ribosome is a large ribonucleoprotein complex responsible for the synthesis of proteins in the cell. This is Large ribosomal subunit protein eL24 (RPL24) from Bos taurus (Bovine).